Consider the following 602-residue polypeptide: Elongation factor 4 (602 aa).

Positions 7-189 (RNIRNFSIIA…AIVQRIPAPQ (183 aa)) constitute a tr-type G domain. Residues 19-24 (DHGKST) and 136-139 (NKID) contribute to the GTP site.

This sequence belongs to the TRAFAC class translation factor GTPase superfamily. Classic translation factor GTPase family. LepA subfamily.

It is found in the cell inner membrane. It carries out the reaction GTP + H2O = GDP + phosphate + H(+). Functionally, required for accurate and efficient protein synthesis under certain stress conditions. May act as a fidelity factor of the translation reaction, by catalyzing a one-codon backward translocation of tRNAs on improperly translocated ribosomes. Back-translocation proceeds from a post-translocation (POST) complex to a pre-translocation (PRE) complex, thus giving elongation factor G a second chance to translocate the tRNAs correctly. Binds to ribosomes in a GTP-dependent manner. The polypeptide is Elongation factor 4 (Xylella fastidiosa (strain M23)).